Reading from the N-terminus, the 338-residue chain is Tagatose 1,6-diphosphate aldolase (338 aa).

The protein belongs to the aldolase LacD family.

It catalyses the reaction D-tagatofuranose 1,6-bisphosphate = D-glyceraldehyde 3-phosphate + dihydroxyacetone phosphate. It participates in carbohydrate metabolism; D-tagatose 6-phosphate degradation; D-glyceraldehyde 3-phosphate and glycerone phosphate from D-tagatose 6-phosphate: step 2/2. This chain is Tagatose 1,6-diphosphate aldolase, found in Listeria monocytogenes serotype 4a (strain HCC23).